Here is a 442-residue protein sequence, read N- to C-terminus: ATP-dependent RNA helicase SUB2-2 (442 aa).

The short motif at 58–86 (TGFKDFLLKPELARAIIDCGFEHPSEVQQ) is the Q motif element. In terms of domain architecture, Helicase ATP-binding spans 89–264 (IPQSIHGTDV…RRFLQNPLEI (176 aa)). 102–109 (AKSGLGKT) serves as a coordination point for ATP. The DECD box signature appears at 211–214 (DECD). The region spanning 292–437 (KLAQLLDDLE…EFPEEGIDPS (146 aa)) is the Helicase C-terminal domain.

This sequence belongs to the DEAD box helicase family. DECD subfamily.

It is found in the nucleus. The catalysed reaction is ATP + H2O = ADP + phosphate + H(+). Functionally, ATP-binding RNA helicase involved in transcription elongation and required for the export of mRNA out of the nucleus. SUB2 also plays a role in pre-mRNA splicing and spliceosome assembly. May be involved in rDNA and telomeric silencing, and maintenance of genome integrity. In Vanderwaltozyma polyspora (strain ATCC 22028 / DSM 70294 / BCRC 21397 / CBS 2163 / NBRC 10782 / NRRL Y-8283 / UCD 57-17) (Kluyveromyces polysporus), this protein is ATP-dependent RNA helicase SUB2-2 (SUB2-2).